The chain runs to 101 residues: Urease subunit beta (101 aa).

Belongs to the urease beta subunit family. Heterotrimer of UreA (gamma), UreB (beta) and UreC (alpha) subunits. Three heterotrimers associate to form the active enzyme.

It is found in the cytoplasm. It catalyses the reaction urea + 2 H2O + H(+) = hydrogencarbonate + 2 NH4(+). It participates in nitrogen metabolism; urea degradation; CO(2) and NH(3) from urea (urease route): step 1/1. The sequence is that of Urease subunit beta from Dechloromonas aromatica (strain RCB).